A 1029-amino-acid polypeptide reads, in one-letter code: Kinesin-like protein KIF17 (1029 aa).

The Kinesin motor domain occupies 5 to 335 (AVKVVVRCRP…LRYANRAKNI (331 aa)). 91–98 (GQTGSGKS) contributes to the ATP binding site. A coiled-coil region spans residues 346 to 462 (KDALLREYQE…EENLRKETEA (117 aa)). Disordered regions lie at residues 523 to 569 (ELPK…MPTE) and 647 to 673 (VPAP…PPRP). Residues 532-551 (SEISLGSSESSSLEETSVSE) show a composition bias toward low complexity. Basic and acidic residues predominate over residues 657–673 (SDARPEAEAADDFPPRP). Residues 739–846 (QQVLARLQLL…QLEKIDYLAT (108 aa)) are a coiled coil. Disordered stretches follow at residues 908 to 931 (AVST…EPNM) and 968 to 1029 (KSLT…SEPL).

It belongs to the TRAFAC class myosin-kinesin ATPase superfamily. Kinesin family. Homodimer. Interacts with APBA1 (via PDZ domain); the interaction is direct and is required for association of KIF17 with the cargo that is to be transported. Interacts with IFT B complex components IFT52 and IFT57. Interacts with IFT70B. Interacts with PIWIL1. Interacts with TBATA.

The protein resides in the cytoplasm. The protein localises to the cytoskeleton. It localises to the cell projection. It is found in the cilium. Its subcellular location is the dendrite. In terms of biological role, dendrite-specific motor protein which, in association with the Apba1-containing complex (LIN-10-LIN-2-LIN-7 complex), transports vesicles containing N-methyl-D-aspartate (NMDA) receptor subunit NR2B along microtubules. The chain is Kinesin-like protein KIF17 (KIF17) from Homo sapiens (Human).